The sequence spans 109 residues: Nucleoid-associated protein ASA_2087 (109 aa).

2 disordered regions span residues 1–23 (MFGKGGMGNLMKQAQQMQERMQK) and 87–109 (QSKSKMGELTGGMQLPPGMKLPF). The segment covering 11 to 23 (MKQAQQMQERMQK) has biased composition (low complexity).

It belongs to the YbaB/EbfC family. Homodimer.

Its subcellular location is the cytoplasm. The protein resides in the nucleoid. Binds to DNA and alters its conformation. May be involved in regulation of gene expression, nucleoid organization and DNA protection. In Aeromonas salmonicida (strain A449), this protein is Nucleoid-associated protein ASA_2087.